The following is a 729-amino-acid chain: Denticleless protein homolog (729 aa).

An N-acetylmethionine modification is found at M1. WD repeat units follow at residues 47–89 (GVPV…SKKT), 96–135 (AHWN…LMGT), and 138–178 (GHQC…KDGF). Residues 168-171 (WDTR) carry the DDB1-binding motif motif. Residues 189–198 (HNTADKQTPS) show a composition bias toward polar residues. The disordered stretch occupies residues 189–212 (HNTADKQTPSKPKKKQNSKGLAPA). Position 196 is a phosphothreonine (T196). Positions 197–203 (PSKPKKK) match the Nuclear localization signal motif. WD repeat units lie at residues 214–253 (DSQQ…TAYR), 269–308 (TRKL…TSPV), 313–354 (GHQN…HPPT), and 358–398 (GHSQ…EEKP). A DDB1-binding motif motif is present at residues 243-246 (WDLR). A phosphoserine mark is found at S409 and S425. Disordered regions lie at residues 416 to 445 (KACP…SSPS) and 460 to 491 (PSST…VSPK). Over residues 427 to 445 (STPAKAPRAKSSPSISSPS) the composition is skewed to low complexity. A compositionally biased stretch (polar residues) spans 460-475 (PSSTPTFSVKTTPATT). T463 bears the Phosphothreonine; by CDK1 and CDK2 mark. Residues 476 to 491 (RSSVSRRGSISSVSPK) show a composition bias toward low complexity. Phosphoserine is present on residues S484, S489, S494, and S511. The tract at residues 504–546 (VTRTPSSSPPVTPPASETKISSPRKALIPVSQKSSQADACSES) is disordered. T515 carries the post-translational modification Phosphothreonine. The residue at position 556 (S556) is a Phosphoserine. A compositionally biased stretch (polar residues) spans 596–607 (VLSQDSEGPTKS). A disordered region spans residues 596 to 705 (VLSQDSEGPT…GPVTITPSSM (110 aa)). Low complexity-rich tracts occupy residues 630–645 (EGCG…CGEG) and 674–688 (SSPR…SSRR). Phosphoserine occurs at positions 675 and 678. Phosphothreonine occurs at positions 683 and 701.

Belongs to the WD repeat cdt2 family. Component of the DCX(DTL) E3 ubiquitin ligase complex (also called CRL4(CDT2)), at least composed of CUL4 (CUL4A or CUL4B), DDB1, DTL/CDT2 and RBX1. Interacts with CDKN1A and DDB1. Interacts with FBXO11; SCF(FBXWO11) controls DTL stability but DCX(DTL) does not control FBXO11 stability. Interacts with CRY1. Post-translationally, ubiquitinated by the anaphase promoting complex/cyclosome (APC/C). Autoubiquitinated through 'Lys-48'-polyubiquitin chains in a PCNA-independent reaction, allowing proteasomal turnover. Polyubiquitinated by SCF(FBXO11) when not phosphorylated, leading to its degradation. A tight regulation of the polyubiquitination by SCF(FBXO11) is involved in the control of different processes such as TGF-beta signaling, cell cycle progression and exit. In terms of processing, phosphorylated at Thr-463 by CDK1/Cyclin B and CDK2/Cycnlin A but not by CDK2/Cyclin E, MAPK1 or PLK1. Phosphorylation at Thr-463 inhibits the interaction with FBXO11 and decreases upon cell cycle exit induced by TGF-beta or serum starvation.

The protein localises to the nucleus. Its subcellular location is the nucleus membrane. It localises to the cytoplasm. The protein resides in the cytoskeleton. It is found in the microtubule organizing center. The protein localises to the centrosome. Its subcellular location is the chromosome. Its pathway is protein modification; protein ubiquitination. Substrate-specific adapter of a DCX (DDB1-CUL4-X-box) E3 ubiquitin-protein ligase complex required for cell cycle control, DNA damage response and translesion DNA synthesis. The DCX(DTL) complex, also named CRL4(CDT2) complex, mediates the polyubiquitination and subsequent degradation of CDT1, CDKN1A/p21(CIP1), FBH1, KMT5A and SDE2. CDT1 degradation in response to DNA damage is necessary to ensure proper cell cycle regulation of DNA replication. CDKN1A/p21(CIP1) degradation during S phase or following UV irradiation is essential to control replication licensing. KMT5A degradation is also important for a proper regulation of mechanisms such as TGF-beta signaling, cell cycle progression, DNA repair and cell migration. Most substrates require their interaction with PCNA for their polyubiquitination: substrates interact with PCNA via their PIP-box, and those containing the 'K+4' motif in the PIP box, recruit the DCX(DTL) complex, leading to their degradation. In undamaged proliferating cells, the DCX(DTL) complex also promotes the 'Lys-164' monoubiquitination of PCNA, thereby being involved in PCNA-dependent translesion DNA synthesis. The DDB1-CUL4A-DTL E3 ligase complex regulates the circadian clock function by mediating the ubiquitination and degradation of CRY1. The sequence is that of Denticleless protein homolog (Dtl) from Mus musculus (Mouse).